We begin with the raw amino-acid sequence, 392 residues long: Stilbene synthase 5 (392 aa).

55 to 58 contacts substrate; that stretch reads KFNR. Cys164 is an active-site residue. Residues Leu267 and 305-307 each bind substrate; that span reads GGP.

This sequence belongs to the thiolase-like superfamily. Chalcone/stilbene synthases family. As to quaternary structure, homodimer.

The protein resides in the cytoplasm. It catalyses the reaction 4-coumaroyl-CoA + 3 malonyl-CoA + 3 H(+) = trans-resveratrol + 4 CO2 + 4 CoA. It participates in phytoalexin biosynthesis; 3,4',5-trihydroxystilbene biosynthesis; 3,4',5-trihydroxystilbene from trans-4-coumarate: step 2/2. In terms of biological role, mediates resistance to pathogens which are sensitive to stilbenes. This chain is Stilbene synthase 5, found in Vitis vinifera (Grape).